The primary structure comprises 397 residues: S-adenosylmethionine:tRNA ribosyltransferase-isomerase (397 aa).

The protein belongs to the QueA family. As to quaternary structure, monomer.

The protein localises to the cytoplasm. It catalyses the reaction 7-aminomethyl-7-carbaguanosine(34) in tRNA + S-adenosyl-L-methionine = epoxyqueuosine(34) in tRNA + adenine + L-methionine + 2 H(+). It participates in tRNA modification; tRNA-queuosine biosynthesis. In terms of biological role, transfers and isomerizes the ribose moiety from AdoMet to the 7-aminomethyl group of 7-deazaguanine (preQ1-tRNA) to give epoxyqueuosine (oQ-tRNA). This chain is S-adenosylmethionine:tRNA ribosyltransferase-isomerase, found in Nostoc sp. (strain PCC 7120 / SAG 25.82 / UTEX 2576).